Reading from the N-terminus, the 124-residue chain is Protein Rev (124 aa).

S5 carries the post-translational modification Phosphoserine; by host CK2. A homomultimerization region spans residues 19 to 27; that stretch reads IIKILYQSN. Positions 25–51 are disordered; the sequence is QSNPYPSPEGTRKARRNRRRRWRARQK. A Nuclear localization signal and RNA-binding (RRE) motif is present at residues 35–51; sequence TRKARRNRRRRWRARQK. The segment covering 37–50 has biased composition (basic residues); the sequence is KARRNRRRRWRARQ. The Nuclear export signal and binding to XPO1 motif lies at 74-85; it reads LELPELDKLSLQ. Residues 90-106 are compositionally biased toward polar residues; that stretch reads TQDVGTSNTSQPQTATG. A disordered region spans residues 90-124; it reads TQDVGTSNTSQPQTATGETVPAGGNYSILGKGAKN.

Belongs to the HIV-1 REV protein family. As to quaternary structure, homomultimer; when bound to the RRE. Multimeric assembly is essential for activity and may involve XPO1. Binds to human KPNB1, XPO1, TNPO1, RANBP5 and IPO7. Interacts with the viral Integrase. Interacts with human KHDRBS1. Interacts with human NAP1; this interaction decreases Rev multimerization and stimulates its activity. Interacts with human DEAD-box helicases DDX3 and DDX24; these interactions may serve for viral RNA export to the cytoplasm and packaging, respectively. Interacts with human PSIP1; this interaction may inhibit HIV-1 DNA integration by promoting dissociation of the Integrase-LEDGF/p75 complex. Asymmetrically arginine dimethylated at one site by host PRMT6. Methylation impairs the RNA-binding activity and export of viral RNA from the nucleus to the cytoplasm. In terms of processing, phosphorylated by protein kinase CK2. Presence of, and maybe binding to the N-terminus of the regulatory beta subunit of CK2 is necessary for CK2-mediated Rev's phosphorylation.

Its subcellular location is the host nucleus. The protein localises to the host nucleolus. It is found in the host cytoplasm. Its function is as follows. Escorts unspliced or incompletely spliced viral pre-mRNAs (late transcripts) out of the nucleus of infected cells. These pre-mRNAs carry a recognition sequence called Rev responsive element (RRE) located in the env gene, that is not present in fully spliced viral mRNAs (early transcripts). This function is essential since most viral proteins are translated from unspliced or partially spliced pre-mRNAs which cannot exit the nucleus by the pathway used by fully processed cellular mRNAs. Rev itself is translated from a fully spliced mRNA that readily exits the nucleus. Rev's nuclear localization signal (NLS) binds directly to KPNB1/Importin beta-1 without previous binding to KPNA1/Importin alpha-1. KPNB1 binds to the GDP bound form of RAN (Ran-GDP) and targets Rev to the nucleus. In the nucleus, the conversion from Ran-GDP to Ran-GTP dissociates Rev from KPNB1 and allows Rev's binding to the RRE in viral pre-mRNAs. Rev multimerization on the RRE via cooperative assembly exposes its nuclear export signal (NES) to the surface. Rev can then form a complex with XPO1/CRM1 and Ran-GTP, leading to nuclear export of the complex. Conversion from Ran-GTP to Ran-GDP mediates dissociation of the Rev/RRE/XPO1/RAN complex, so that Rev can return to the nucleus for a subsequent round of export. Beside KPNB1, also seems to interact with TNPO1/Transportin-1, RANBP5/IPO5 and IPO7/RANBP7 for nuclear import. The nucleoporin-like HRB/RIP is an essential cofactor that probably indirectly interacts with Rev to release HIV RNAs from the perinuclear region to the cytoplasm. This Pan (chimpanzees) protein is Protein Rev.